The following is a 132-amino-acid chain: Small ribosomal subunit protein uS9 (132 aa).

The protein belongs to the universal ribosomal protein uS9 family.

This chain is Small ribosomal subunit protein uS9, found in Baumannia cicadellinicola subsp. Homalodisca coagulata.